We begin with the raw amino-acid sequence, 206 residues long: MSETGLTSSDFTEENEPFALFAEWLKDATASEINDPNAVALATVDENGLPNVRMVLLKGVDDRGFVFYTNFESQKGQEILGQKKAAMCFHWKSLRRQVRLRGEVEIVSDEEADAYYASRPRGSRIGAWASKQSRPLEGRFALEKAVAEYTARYAIGEIPRPSHWSGFRIRPVSIEFWHDRKFRLHDRIEFRRETPDGAWSKVRMYP.

FMN contacts are provided by residues Arg53–Lys58, Tyr68–Thr69, Lys75, and Gln97. Lys58 is a substrate binding site. Positions 115, 119, and 123 each coordinate substrate. Residues Gln132–Ser133 and Trp177 each bind FMN. Arg183 to His185 provides a ligand contact to substrate. Arg187 serves as a coordination point for FMN.

The protein belongs to the pyridoxamine 5'-phosphate oxidase family. As to quaternary structure, homodimer. It depends on FMN as a cofactor.

It carries out the reaction pyridoxamine 5'-phosphate + O2 + H2O = pyridoxal 5'-phosphate + H2O2 + NH4(+). It catalyses the reaction pyridoxine 5'-phosphate + O2 = pyridoxal 5'-phosphate + H2O2. The protein operates within cofactor metabolism; pyridoxal 5'-phosphate salvage; pyridoxal 5'-phosphate from pyridoxamine 5'-phosphate: step 1/1. Its pathway is cofactor metabolism; pyridoxal 5'-phosphate salvage; pyridoxal 5'-phosphate from pyridoxine 5'-phosphate: step 1/1. Catalyzes the oxidation of either pyridoxine 5'-phosphate (PNP) or pyridoxamine 5'-phosphate (PMP) into pyridoxal 5'-phosphate (PLP). In Agrobacterium fabrum (strain C58 / ATCC 33970) (Agrobacterium tumefaciens (strain C58)), this protein is Pyridoxine/pyridoxamine 5'-phosphate oxidase.